The primary structure comprises 320 residues: tRNA (guanosine(34)-2'-O)-methyltransferase (320 aa).

5 residues coordinate S-adenosyl-L-methionine: Gly-53, Trp-55, Asp-81, Asp-97, and Asp-122. Lys-162 functions as the Proton acceptor in the catalytic mechanism.

The protein belongs to the class I-like SAM-binding methyltransferase superfamily. RNA methyltransferase RlmE family. TRM7 subfamily. As to quaternary structure, interacts with CG33172/WDR6.

It is found in the cytoplasm. The enzyme catalyses cytidine(32)/guanosine(34) in tRNA + 2 S-adenosyl-L-methionine = 2'-O-methylcytidine(32)/2'-O-methylguanosine(34) in tRNA + 2 S-adenosyl-L-homocysteine + 2 H(+). Methylates the 2'-O-ribose of nucleotides at position 34 of the tRNA anticodon loop of substrate tRNAs. May require WDR6 for methylation of the nucleotide at position 34 of the anticodon loop of substrate tRNAs. Plays a role in neurogenesis. Requisite for RNA-mediated gene silencing. Modifies position 34 in tRNA(Leu(CAA)), tRNA(Leu(CAG)), tRNA(Phe(GAA)), and tRNA(Trp(CCA)). This chain is tRNA (guanosine(34)-2'-O)-methyltransferase, found in Drosophila melanogaster (Fruit fly).